A 95-amino-acid polypeptide reads, in one-letter code: Acylphosphatase (95 aa).

Residues 8-95 (RAKILVRGKV…GNFRTFEIKK (88 aa)) enclose the Acylphosphatase-like domain. Active-site residues include Arg23 and Asn41.

Belongs to the acylphosphatase family.

It catalyses the reaction an acyl phosphate + H2O = a carboxylate + phosphate + H(+). The polypeptide is Acylphosphatase (acyP) (Leptospira interrogans serogroup Icterohaemorrhagiae serovar copenhageni (strain Fiocruz L1-130)).